A 249-amino-acid polypeptide reads, in one-letter code: Cis-4-hydroxycyclohexanecarboxylate dehydrogenase (249 aa).

Residues aspartate 38, aspartate 63, valine 64, asparagine 90, tyrosine 156, lysine 160, alanine 189, and threonine 191 each contribute to the NAD(+) site. The active-site Proton acceptor is the tyrosine 156.

It belongs to the short-chain dehydrogenases/reductases (SDR) family. In terms of assembly, homotetramer.

It catalyses the reaction cis-4-hydroxycyclohexane-1-carboxylate + NAD(+) = 4-oxocyclohexane-1-carboxylate + NADH + H(+). Functionally, dehydrogenase involved in a cyclohexanecarboxylate (CHCA) degradation pathway. Catalyzes the NAD(+)-dependent dehydrogenation of cis-4-hydroxycyclohexanecarboxylate (cis-4-hydroxyCHCA) to form 4-oxocyclohexanecarboxylate (4-oxoCHCA). Is highly specific for the cis-4-hydroxy derivative and shows only weak activity with trans-4-hydroxyCHCA. Cannot use NADP(+). This chain is Cis-4-hydroxycyclohexanecarboxylate dehydrogenase, found in Sinomonas cyclohexanicum (Corynebacterium cyclohexanicum).